Consider the following 238-residue polypeptide: Uridylate kinase (238 aa).

Residue 12 to 15 (KLSG) participates in ATP binding. Gly54 contacts UMP. ATP is bound by residues Gly55 and Arg59. UMP-binding positions include Asp74 and 135–142 (TGNPFFTT). Residues Thr162, Tyr168, and Asp171 each contribute to the ATP site.

It belongs to the UMP kinase family. In terms of assembly, homohexamer.

The protein localises to the cytoplasm. The catalysed reaction is UMP + ATP = UDP + ADP. Its pathway is pyrimidine metabolism; CTP biosynthesis via de novo pathway; UDP from UMP (UMPK route): step 1/1. Its activity is regulated as follows. Inhibited by UTP. Its function is as follows. Catalyzes the reversible phosphorylation of UMP to UDP. The sequence is that of Uridylate kinase from Nitrosospira multiformis (strain ATCC 25196 / NCIMB 11849 / C 71).